Reading from the N-terminus, the 214-residue chain is Transcription factor MYB24 (214 aa).

2 HTH myb-type domains span residues 14 to 66 and 67 to 121; these read DAEV…LNYL and RPDV…QKYI. DNA-binding regions (H-T-H motif) lie at residues 42–66 and 94–117; these read WNSL…LNYL and WSKI…RTKI.

As to quaternary structure, interacts (via N-terminus) with TIFY10A/JAZ1, TIFY5A/JAZ8 AND TIFY3A/JAZ11. In terms of tissue distribution, expressed specifically in flowers. Expressed in all four whorls of the flower and in the vascular tissue of stamen filament and sepals. Detected in male and female gametophytes, especially in microspores and ovules. Weakly expressed in petals and the upper part of pistils.

The protein resides in the nucleus. Functionally, transcription factor acting redundantly with MYB21 and MYB57 to control stamen filament elongation in the late developed flowers. Contributes with MYB21 to induction of MYB108 by jasmonate. Repressed at the transcript levels by DELLA proteins. The polypeptide is Transcription factor MYB24 (MYB24) (Arabidopsis thaliana (Mouse-ear cress)).